The primary structure comprises 153 residues: Ubiquitin/ISG15-conjugating enzyme E2 L6 (153 aa).

Residues 2–149 enclose the UBC core domain; the sequence is TASKRVAKEL…AEEFTLQYGV (148 aa). The active-site Glycyl thioester intermediate is the cysteine 86.

It belongs to the ubiquitin-conjugating enzyme family. Interacts with RNF19A, RNF19B and RNF144B. Interacts with FLT3 (tyrosine phosphorylated). In terms of processing, ISGylated.

It catalyses the reaction S-ubiquitinyl-[E1 ubiquitin-activating enzyme]-L-cysteine + [E2 ubiquitin-conjugating enzyme]-L-cysteine = [E1 ubiquitin-activating enzyme]-L-cysteine + S-ubiquitinyl-[E2 ubiquitin-conjugating enzyme]-L-cysteine.. The protein operates within protein modification; protein ubiquitination. Functionally, catalyzes the covalent attachment of ubiquitin to other proteins. Functions in the E6/E6-AP-induced ubiquitination of p53/TP53. Promotes ubiquitination and subsequent proteasomal degradation of FLT3. This chain is Ubiquitin/ISG15-conjugating enzyme E2 L6 (Ube2l6), found in Rattus norvegicus (Rat).